Here is a 276-residue protein sequence, read N- to C-terminus: Formamidopyrimidine-DNA glycosylase (276 aa).

The active-site Schiff-base intermediate with DNA is the Pro2. The active-site Proton donor is Glu3. Residue Lys58 is the Proton donor; for beta-elimination activity of the active site. Residues His92, Arg111, and Lys154 each coordinate DNA. An FPG-type zinc finger spans residues 239-273 (QVYGHAGEECNNCGTILEKIKVNGRGTTFCPHCQV). The Proton donor; for delta-elimination activity role is filled by Arg263.

The protein belongs to the FPG family. As to quaternary structure, monomer. Zn(2+) serves as cofactor.

It catalyses the reaction Hydrolysis of DNA containing ring-opened 7-methylguanine residues, releasing 2,6-diamino-4-hydroxy-5-(N-methyl)formamidopyrimidine.. The catalysed reaction is 2'-deoxyribonucleotide-(2'-deoxyribose 5'-phosphate)-2'-deoxyribonucleotide-DNA = a 3'-end 2'-deoxyribonucleotide-(2,3-dehydro-2,3-deoxyribose 5'-phosphate)-DNA + a 5'-end 5'-phospho-2'-deoxyribonucleoside-DNA + H(+). In terms of biological role, involved in base excision repair of DNA damaged by oxidation or by mutagenic agents. Acts as a DNA glycosylase that recognizes and removes damaged bases. Has a preference for oxidized purines, such as 7,8-dihydro-8-oxoguanine (8-oxoG). Has AP (apurinic/apyrimidinic) lyase activity and introduces nicks in the DNA strand. Cleaves the DNA backbone by beta-delta elimination to generate a single-strand break at the site of the removed base with both 3'- and 5'-phosphates. This chain is Formamidopyrimidine-DNA glycosylase, found in Lactobacillus johnsonii (strain CNCM I-12250 / La1 / NCC 533).